The chain runs to 69 residues: Putative membrane protein insertion efficiency factor (69 aa).

The protein belongs to the UPF0161 family.

It localises to the cell membrane. Its function is as follows. Could be involved in insertion of integral membrane proteins into the membrane. In Clostridium botulinum (strain ATCC 19397 / Type A), this protein is Putative membrane protein insertion efficiency factor.